A 736-amino-acid polypeptide reads, in one-letter code: MARDPRFDILFTPLKLGSKTIRNRFYQVPHCNGAGTNSPGMNMAHRGIKAEGGWGAVNTEQCSIHPECDDTLRITARIWDQGDMRNLRAMVDHVHSHGSLAGCELFYGGPHAPAIESRTISRGPSQYNSEFATVPGCPGFTYNHEADIDELERLQQQYVDAALRARDTGFDLVNVYGAHAYGPMQWLNPYYNRRTDKYGGSFDNRARFWIETLEKIRRAVNDDVALVTRCATDTLYGTKGVELTEDGLRFIELASPYLDLWDVNIGDIAEWGEDAGPSRFYPIAHENDWIRHIKQATNKPVVGVGRYYDPEKMLQVIKAGIIDIIGAARPSIADPWLPRKIDEGRVDDIRTCIGCNVCISRWEMGGVPFICTQNATAGEEYRRGWHPEKFEPKKSDHDVLIVGAGPAGSECARVLMERGYTVHLVDTREKTGGYVNDVATLPGLGEWSFHRDYRQTQLEKLLKKNPECQIALKQKPMTADDILQYGASRVVIATGAKWSTTGVNHRTHEPIPGADASLPHVLTPEQVYEGKKAVGKRVMIINYDAYYTAPSLAEKFARAGHDVTVATVCGLGAYMEYTLEGANMQRLIHELGIKVLGETGCSRVEQGRVELFNIWGEGYKRSYKGAGQLPRNENTSHEWHECDTVILVTSRRSEDTLYRELKARKGEWEANGITNVFVIGDAESPRIIADATFDGHRLAREIEDADPQHQKPYKREQRAWGTAYNPDENPDLVWRV.

An S-6-FMN cysteine modification is found at cysteine 31. Tyrosine 176 to histidine 179 contributes to the substrate binding site. Catalysis depends on tyrosine 181, which acts as the Proton donor. Positions 229 and 329 each coordinate FMN. Residues cysteine 352, cysteine 355, cysteine 358, and cysteine 371 each contribute to the [4Fe-4S] cluster site. Aspartate 398–threonine 427 provides a ligand contact to ADP.

The protein in the N-terminal section; belongs to the NADH:flavin oxidoreductase/NADH oxidase family. Requires FMN as cofactor. The cofactor is [4Fe-4S] cluster.

It carries out the reaction dimethylamine + oxidized [electron-transfer flavoprotein] + H2O + H(+) = methylamine + reduced [electron-transfer flavoprotein] + formaldehyde. The sequence is that of Dimethylamine dehydrogenase (dmd) from Hyphomicrobium sp. (strain x).